We begin with the raw amino-acid sequence, 514 residues long: Maltose/maltodextrin transport system permease protein MalF (514 aa).

Residues 1 to 16 (MDVIKKKHWWQSDALK) lie on the Cytoplasmic side of the membrane. The helical transmembrane segment at 17–36 (WSVLGLLGLLVGYLVVLMYA) threads the bilayer. The Periplasmic segment spans residues 37-39 (QGE). Residues 40–58 (YLFAITTLILSSAGLYIFA) traverse the membrane as a helical segment. Over 59 to 66 (NRKAYAWR) the chain is Cytoplasmic. The helical transmembrane segment at 67-92 (YVYPGMAGMGLFVLFPLVCTIAIAFT) threads the bilayer. The Periplasmic portion of the chain corresponds to 93–275 (NYSSTNQLTF…RVFTDEGIQK (183 aa)). A helical membrane pass occupies residues 276–306 (PFLAIFVWTVVFSLITVFLTVAVGMVLACLV). In terms of domain architecture, ABC transmembrane type-1 spans 281–505 (FVWTVVFSLI…LLVGALAIVN (225 aa)). Topologically, residues 307–318 (QWEALRGKAVYR) are cytoplasmic. A helical membrane pass occupies residues 319 to 336 (VLLILPYAVPSFISILIF). At 337–369 (KGLFNQSFGEINMMLSALFGVKPAWFSDPTTAR) the chain is on the periplasmic side. The helical transmembrane segment at 370–392 (TMLIIVNTWLGYPYMMILCMGLL) threads the bilayer. The Cytoplasmic portion of the chain corresponds to 393–425 (KAIPDDLYEASAMDGAGPFQNFFKITLPLLIKP). A helical membrane pass occupies residues 426–452 (LTPLMIASFAFNFNNFVLIQLLTNGGP). The Periplasmic segment spans residues 453-483 (DRLGTTTPAGYTDLLVNYTYRIAFEGGGGQD). A helical transmembrane segment spans residues 484–505 (FGLAAAIATLIFLLVGALAIVN). The Cytoplasmic segment spans residues 506-514 (LKATRMKFD).

It belongs to the binding-protein-dependent transport system permease family. MalFG subfamily. As to quaternary structure, the complex is composed of two ATP-binding proteins (MalK), two transmembrane proteins (MalG and MalF) and a solute-binding protein (MalE). Protein stability and stable complex formation require YidC.

It is found in the cell inner membrane. Part of the ABC transporter complex MalEFGK involved in maltose/maltodextrin import. Probably responsible for the translocation of the substrate across the membrane. The polypeptide is Maltose/maltodextrin transport system permease protein MalF (Escherichia coli (strain K12)).